We begin with the raw amino-acid sequence, 122 residues long: Large ribosomal subunit protein uL14c (122 aa).

Belongs to the universal ribosomal protein uL14 family. Part of the 50S ribosomal subunit.

Its subcellular location is the plastid. It localises to the cyanelle. Functionally, binds to 23S rRNA. The chain is Large ribosomal subunit protein uL14c from Cyanophora paradoxa.